Consider the following 469-residue polypeptide: Sorting and assembly machinery component 50 homolog (469 aa).

The 81-residue stretch at 45 to 125 (VVVQHVHFDG…LDVTFEVTEL (81 aa)) folds into the POTRA domain. Residue K255 is modified to N6-methyllysine.

The protein belongs to the SAM50/omp85 family. In terms of assembly, associates with the mitochondrial contact site and cristae organizing system (MICOS) complex, composed of at least MICOS10/MIC10, CHCHD3/MIC19, CHCHD6/MIC25, APOOL/MIC27, IMMT/MIC60, APOO/MIC23/MIC26 and QIL1/MIC13. This complex was also known under the names MINOS or MitOS complex. The MICOS complex associates with mitochondrial outer membrane proteins SAMM50, MTX1 and MTX2 (together described as components of the mitochondrial outer membrane sorting assembly machinery (SAM) complex) and DNAJC11, mitochondrial inner membrane protein TMEM11 and with HSPA9. The MICOS and SAM complexes together with DNAJC11 are part of a large protein complex spanning both membranes termed the mitochondrial intermembrane space bridging (MIB) complex. Interacts with IMMT/MIC60. Interacts with CHCHD3/MIC19. Interacts with ARMC1.

The protein resides in the mitochondrion outer membrane. The protein localises to the cytoplasm. It is found in the mitochondrion. In terms of biological role, plays a crucial role in the maintenance of the structure of mitochondrial cristae and the proper assembly of the mitochondrial respiratory chain complexes. Required for the assembly of TOMM40 into the TOM complex. The polypeptide is Sorting and assembly machinery component 50 homolog (SAMM50) (Bos taurus (Bovine)).